Here is a 247-residue protein sequence, read N- to C-terminus: ATP synthase subunit a, chloroplastic (247 aa).

5 helical membrane-spanning segments follow: residues 38-58 (QVLITSWVVIAILLISTILVV), 95-115 (VPFIGTLFLFIFVSNWSGALL), 134-154 (INTTVALALLTSVAYFYAGIS), 199-219 (LVVVVLVSLVPLVIPIPVMFL), and 220-240 (GLFTSGIQALIFATLAAAYIG).

This sequence belongs to the ATPase A chain family. In terms of assembly, F-type ATPases have 2 components, CF(1) - the catalytic core - and CF(0) - the membrane proton channel. CF(1) has five subunits: alpha(3), beta(3), gamma(1), delta(1), epsilon(1). CF(0) has four main subunits: a, b, b' and c.

The protein localises to the plastid. The protein resides in the chloroplast thylakoid membrane. Functionally, key component of the proton channel; it plays a direct role in the translocation of protons across the membrane. This is ATP synthase subunit a, chloroplastic from Cicer arietinum (Chickpea).